We begin with the raw amino-acid sequence, 1106 residues long: Protein kinase C (1106 aa).

One can recognise an REM-1 1 domain in the interval 1 to 67; the sequence is MDGDDLIASV…MRELQLRQMK (67 aa). The disordered stretch occupies residues 65–138; the sequence is QMKQEGASPT…PRPFAPVPKA (74 aa). A compositionally biased stretch (pro residues) spans 79 to 93; it reads PPNPDGSAPVPPPKD. The REM-1 2 domain maps to 149–226; that stretch reads KYDTPYLGPK…LKRYEDLHVD (78 aa). The C2 domain maps to 232 to 350; the sequence is APDDESLSTP…MRRKKIESEF (119 aa). Over residues 361-370 the composition is skewed to basic and acidic residues; that stretch reads MEHGAAHGRQ. Residues 361-400 form a disordered region; sequence MEHGAAHGRQDAGGAPGSSNRPPSGGHSGGPGQGYAGGAP. The segment covering 386–400 has biased composition (gly residues); that stretch reads GHSGGPGQGYAGGAP. 2 consecutive Phorbol-ester/DAG-type zinc fingers follow at residues 460–508 and 528–578; these read GHKF…VTKC and PHRF…PDFC. Polar residues-rich tracts occupy residues 600–609 and 658–668; these read KSASVSSGLS and YIPPQSPTAAQ. Disordered stretches follow at residues 600–625 and 658–719; these read KSAS…PQDN and YIPP…HAHY. A compositionally biased stretch (low complexity) spans 683–693; that stretch reads AAAAAAAAAAA. In terms of domain architecture, Protein kinase spans 781 to 1040; sequence FNFLAVLGKG…AQEVMSHAFF (260 aa). ATP-binding positions include 787 to 795 and K810; that span reads LGKGNFGKV. D906 functions as the Proton acceptor in the catalytic mechanism. In terms of domain architecture, AGC-kinase C-terminal spans 1041–1106; the sequence is RNINWDDIYH…RGFSYTADFA (66 aa). The residue at position 1082 (T1082) is a Phosphothreonine. A Phosphoserine modification is found at S1100. Y1101 carries the post-translational modification Phosphotyrosine.

The protein belongs to the protein kinase superfamily. AGC Ser/Thr protein kinase family. PKC subfamily. In terms of assembly, interacts with hsp90.

The enzyme catalyses L-seryl-[protein] + ATP = O-phospho-L-seryl-[protein] + ADP + H(+). The catalysed reaction is L-threonyl-[protein] + ATP = O-phospho-L-threonyl-[protein] + ADP + H(+). Protein kinase C; part of cell wall integrity (CWI) signaling pathway composed of pkcA, the bck1-mkk2-mpka MAPK cascade and the downstream rlmA transcription regulator. The CWI signaling pathway regulates cell wall integrity and pyomelanin formation. CWI also controls oxidative stress response, gliotoxin production, iron adaptation and asexual development. Finally, CWI is constitutively required for A.fumigatus to cope with the temperature increase found in the mammalian lung environment, during infection. Modulates the expression of fumiquinazoline cluster during conidiogenesis. In Aspergillus fumigatus (strain ATCC MYA-4609 / CBS 101355 / FGSC A1100 / Af293) (Neosartorya fumigata), this protein is Protein kinase C.